A 128-amino-acid chain; its full sequence is Platelet basic protein (128 aa).

The N-terminal stretch at 1–34 (MSLRLDTTPSCNSARPLHALQVLLLLSLLLTALA) is a signal peptide. 2 disulfide bridges follow: Cys63-Cys89 and Cys65-Cys105.

This sequence belongs to the intercrine alpha (chemokine CxC) family. Beta-thromboglobulin is a homotetramer. In terms of processing, proteolytic removal of residues 1-9 produces the active peptide connective tissue-activating peptide III (CTAP-III) (low-affinity platelet factor IV (LA-PF4)). Post-translationally, proteolytic removal of residues 1-13 produces the active peptide beta-thromboglobulin, which is released from platelets along with platelet factor 4 and platelet-derived growth factor. NAP-2(1-66) is produced by proteolytical processing, probably after secretion by leukocytes other than neutrophils. In terms of processing, NAP-2(73) and NAP-2(74) seem not be produced by proteolytical processing of secreted precursors but are released in an active form from platelets.

It localises to the secreted. Its function is as follows. LA-PF4 stimulates DNA synthesis, mitosis, glycolysis, intracellular cAMP accumulation, prostaglandin E2 secretion, and synthesis of hyaluronic acid and sulfated glycosaminoglycan. It also stimulates the formation and secretion of plasminogen activator by human synovial cells. NAP-2 is a ligand for CXCR1 and CXCR2, and NAP-2, NAP-2(73), NAP-2(74), NAP-2(1-66), and most potent NAP-2(1-63) are chemoattractants and activators for neutrophils. TC-1 and TC-2 are antibacterial proteins, in vitro released from activated platelet alpha-granules. CTAP-III(1-81) is more potent than CTAP-III desensitize chemokine-induced neutrophil activation. This is Platelet basic protein (PPBP) from Homo sapiens (Human).